The sequence spans 331 residues: Nucleoporin Nup35 (331 aa).

Disordered regions lie at residues 1–63 (MEPM…HELN) and 79–110 (AHTA…GLFD). Polar residues-rich tracts occupy residues 8–20 (SPVN…QTQY), 35–56 (HKNT…SPGG), and 84–104 (GANS…TGPP). The RRM Nup35-type domain occupies 187 to 268 (RLSDFWVTIF…SRCTDRSVID (82 aa)).

This sequence belongs to the Nup35 family. In terms of assembly, interacts with Nup154.

The protein resides in the nucleus. The protein localises to the nuclear pore complex. Its function is as follows. Functions as a component of the nuclear pore complex (NPC). May have a role in the organization of the inner nuclear membrane proteins at the nuclear envelope together with Nup154. This Drosophila melanogaster (Fruit fly) protein is Nucleoporin Nup35.